Reading from the N-terminus, the 402-residue chain is Tryptophan synthase beta chain 2 (402 aa).

N6-(pyridoxal phosphate)lysine is present on lysine 97.

This sequence belongs to the TrpB family. As to quaternary structure, tetramer of two alpha and two beta chains. Pyridoxal 5'-phosphate is required as a cofactor.

It carries out the reaction (1S,2R)-1-C-(indol-3-yl)glycerol 3-phosphate + L-serine = D-glyceraldehyde 3-phosphate + L-tryptophan + H2O. It participates in amino-acid biosynthesis; L-tryptophan biosynthesis; L-tryptophan from chorismate: step 5/5. Functionally, the beta subunit is responsible for the synthesis of L-tryptophan from indole and L-serine. This chain is Tryptophan synthase beta chain 2 (trpB2), found in Wolinella succinogenes (strain ATCC 29543 / DSM 1740 / CCUG 13145 / JCM 31913 / LMG 7466 / NCTC 11488 / FDC 602W) (Vibrio succinogenes).